A 603-amino-acid chain; its full sequence is Proline--tRNA ligase (603 aa).

The protein belongs to the class-II aminoacyl-tRNA synthetase family. ProS type 1 subfamily. Homodimer.

It localises to the cytoplasm. The catalysed reaction is tRNA(Pro) + L-proline + ATP = L-prolyl-tRNA(Pro) + AMP + diphosphate. In terms of biological role, catalyzes the attachment of proline to tRNA(Pro) in a two-step reaction: proline is first activated by ATP to form Pro-AMP and then transferred to the acceptor end of tRNA(Pro). As ProRS can inadvertently accommodate and process non-cognate amino acids such as alanine and cysteine, to avoid such errors it has two additional distinct editing activities against alanine. One activity is designated as 'pretransfer' editing and involves the tRNA(Pro)-independent hydrolysis of activated Ala-AMP. The other activity is designated 'posttransfer' editing and involves deacylation of mischarged Ala-tRNA(Pro). The misacylated Cys-tRNA(Pro) is not edited by ProRS. The polypeptide is Proline--tRNA ligase (Paenarthrobacter aurescens (strain TC1)).